The sequence spans 350 residues: Probable peptidyl-alpha-hydroxyglycine alpha-amidating lyase pgal-1 (350 aa).

An N-terminal signal peptide occupies residues 1–19 (MRASTACLVALLAPFYISA). An NHL 1 repeat occupies 46-90 (DRELIGLFNPSKEIGQVSGLAVNKNGHIVAFHRSGRVWDEKSFND). N-linked (GlcNAc...) asparagine glycosylation is present at asparagine 103. NHL repeat units follow at residues 113-154 (KKVI…IDAK), 162-206 (LGEK…FDAK), and 212-256 (QINA…FSAG). 2 disulfide bridges follow: cysteine 176–cysteine 196 and cysteine 241–cysteine 252.

It belongs to the peptidyl-alpha-hydroxyglycine alpha-amidating lyase family. It depends on Zn(2+) as a cofactor.

The protein localises to the secreted. It carries out the reaction a [peptide]-C-terminal (2S)-2-hydroxyglycine = a [peptide]-C-terminal amide + glyoxylate. Probable lyase that catalyzes an essential reaction in C-terminal alpha-amidation of peptides. Mediates the dismutation of the unstable peptidyl(2-hydroxyglycine) intermediate to glyoxylate and the corresponding desglycine peptide amide. C-terminal amidation of peptides such as neuropeptides is essential for full biological activity. The sequence is that of Probable peptidyl-alpha-hydroxyglycine alpha-amidating lyase pgal-1 from Caenorhabditis elegans.